We begin with the raw amino-acid sequence, 596 residues long: Cytochrome P450 monooxygenase FUM15 (596 aa).

Residues 476 to 512 (DRWLSPKNGNREATEQSKFKIGNQKRDSTAAPEVTQE) are disordered. The span at 484-503 (GNREATEQSKFKIGNQKRDS) shows a compositional bias: basic and acidic residues. Cys-536 lines the heme pocket.

The protein belongs to the cytochrome P450 family. It depends on heme as a cofactor.

It localises to the endoplasmic reticulum. The protein operates within secondary metabolite biosynthesis. Cytochrome P450 monooxygenase; part of the gene cluster that mediates the biosynthesis of fumonisins B1 (FB1), B2 (FB2), B3 (FB3), and B4 (FB4), which are carcinogenic mycotoxins. Within the pathway, FUM15 may be responsible for the hydroxylations at positions C-14 and/or C-15. Also plays a role in self-protection from FB1 toxicity, probably through derivatization of FB1, and may contribute to ceramide biosynthesis. The biosynthesis starts with the FUM1-catalyzed carbon chain assembly from one molecule of acetyl-CoA, eight molecules of malonyl-CoA, and two molecules of methionine (in S-adenosyl form). The C18 polyketide chain is released from the enzyme by a nucleophilic attack of a carbanion, which is derived from R-carbon of alanine by decarboxylation, on the carbonyl carbon of polyketide acyl chain. This step is catalyzed by the pyridoxal 5'-phosphate-dependent aminoacyl transferase FUM8. The resultant 3-keto intermediate is then stereospecifically reduced to a 3-hydroxyl product by reductase FUM13. Subsequent oxidations at C-10 by the cytochrome P450 monooxygenase FUM2, C-14 and C-15 by FUM6, FUM12 or FUM15, tricarballylic esterification of the hydroxyl groups on C-14 and C-15 by acyltransferase FUM14, and C-5 hydroxylation by 2-keto-glutarate-dependent dioxygenase FUM3 furnish the biosynthesis of fumonisins. The tricarballylic moieties are most likely derived from the citric acid cycle, and their addition to the carbon backbone may involve FUM7, FUM10, FUM11 and FUM14. This chain is Cytochrome P450 monooxygenase FUM15, found in Gibberella moniliformis (strain M3125 / FGSC 7600) (Maize ear and stalk rot fungus).